A 262-amino-acid polypeptide reads, in one-letter code: Hydroxyethylthiazole kinase (262 aa).

A substrate-binding site is contributed by methionine 43. 2 residues coordinate ATP: arginine 118 and threonine 164. Position 191 (alanine 191) interacts with substrate.

The protein belongs to the Thz kinase family. It depends on Mg(2+) as a cofactor.

The enzyme catalyses 5-(2-hydroxyethyl)-4-methylthiazole + ATP = 4-methyl-5-(2-phosphooxyethyl)-thiazole + ADP + H(+). It functions in the pathway cofactor biosynthesis; thiamine diphosphate biosynthesis; 4-methyl-5-(2-phosphoethyl)-thiazole from 5-(2-hydroxyethyl)-4-methylthiazole: step 1/1. Functionally, catalyzes the phosphorylation of the hydroxyl group of 4-methyl-5-beta-hydroxyethylthiazole (THZ). This Cereibacter sphaeroides (strain ATCC 17023 / DSM 158 / JCM 6121 / CCUG 31486 / LMG 2827 / NBRC 12203 / NCIMB 8253 / ATH 2.4.1.) (Rhodobacter sphaeroides) protein is Hydroxyethylthiazole kinase.